The chain runs to 317 residues: Ribose-phosphate pyrophosphokinase (317 aa).

Residues 43–45 and 102–103 each bind ATP; these read DGE and RQ. 2 residues coordinate Mg(2+): His-136 and Asp-175. The active site involves Lys-198. D-ribose 5-phosphate is bound by residues Arg-200, Asp-224, and 228–232; that span reads DTAGT.

Belongs to the ribose-phosphate pyrophosphokinase family. Class I subfamily. As to quaternary structure, homohexamer. Requires Mg(2+) as cofactor.

It is found in the cytoplasm. It catalyses the reaction D-ribose 5-phosphate + ATP = 5-phospho-alpha-D-ribose 1-diphosphate + AMP + H(+). The protein operates within metabolic intermediate biosynthesis; 5-phospho-alpha-D-ribose 1-diphosphate biosynthesis; 5-phospho-alpha-D-ribose 1-diphosphate from D-ribose 5-phosphate (route I): step 1/1. Its function is as follows. Involved in the biosynthesis of the central metabolite phospho-alpha-D-ribosyl-1-pyrophosphate (PRPP) via the transfer of pyrophosphoryl group from ATP to 1-hydroxyl of ribose-5-phosphate (Rib-5-P). The protein is Ribose-phosphate pyrophosphokinase of Corynebacterium ammoniagenes (Brevibacterium ammoniagenes).